The chain runs to 103 residues: Large ribosomal subunit protein bL21 (103 aa).

It belongs to the bacterial ribosomal protein bL21 family. As to quaternary structure, part of the 50S ribosomal subunit. Contacts protein L20.

Its function is as follows. This protein binds to 23S rRNA in the presence of protein L20. In Kineococcus radiotolerans (strain ATCC BAA-149 / DSM 14245 / SRS30216), this protein is Large ribosomal subunit protein bL21.